The primary structure comprises 253 residues: Uracil-DNA glycosylase (253 aa).

The active-site Proton acceptor is D79.

The protein belongs to the uracil-DNA glycosylase (UDG) superfamily. UNG family.

The protein resides in the cytoplasm. It catalyses the reaction Hydrolyzes single-stranded DNA or mismatched double-stranded DNA and polynucleotides, releasing free uracil.. Excises uracil residues from the DNA which can arise as a result of misincorporation of dUMP residues by DNA polymerase or due to deamination of cytosine. The protein is Uracil-DNA glycosylase of Xylella fastidiosa (strain M23).